A 702-amino-acid polypeptide reads, in one-letter code: Zinc finger CCCH domain-containing protein 62 (702 aa).

Residues 1 to 77 (MAAPAADDDD…SYDDPTFDPA (77 aa)) are disordered. Acidic residues predominate over residues 18-54 (EEDDGEEEEGSEEEVESDDEEEEEGEGYDWSEEDDPE). The SAP domain maps to 132 to 166 (LEKLKVYECKAYLRMHKLRLSGNKEVLLTRIRGQI). 4 disordered regions span residues 288-349 (EKHA…NTVQ), 405-532 (SRTS…QQQP), 546-602 (GGTS…RETH), and 634-673 (QMSQDQYHHQQNHHQNYHGRQGMNGNQYHDRQNHNQNPQR). Residues 298–325 (KTREVRIKDKENERMRRLNRNKENKSKG) are compositionally biased toward basic and acidic residues. Polar residues-rich tracts occupy residues 326-349 (QDNMNKKSSQAVFPQHTVTTNTVQ) and 405-419 (SRTSTTQLINHQAPS). The span at 430–448 (QQQQQQQPPKSIKPAPIQQ) shows a compositional bias: low complexity. 4 stretches are compositionally biased toward polar residues: residues 472–502 (SQEQRAAVSQTSAARQDFTNHQAPPSRQHGG), 522–532 (QQAVSYTQQQP), 546–565 (GGTSTSRTGFMDRQSNNWGS), and 575–591 (PFTQKAKTYQHGSNGSG). Residues 674–702 (FRPWKPCFIYQQQGWCPYGENCKFMHDLR) form a C3H1-type zinc finger.

This chain is Zinc finger CCCH domain-containing protein 62, found in Oryza sativa subsp. japonica (Rice).